The following is a 1113-amino-acid chain: MTSSGKIRIYELSRDLNLENKDVLNAAKKLSIPAKSHSSSISNAEANEIKAFLNKQSNQSINNKTKQNSSKEILSLKKAGSKPIKDEITKKKANLPPKASAESQSSKPRIETSKAPVAPIKPIKEPVQKANTSNQSKGVINNLIQPQKPSPLQPKQPKSIHLENNASKQNIEDNNNFQERSPRTQLVQKPPLPTKNNEPPQQKTSIPKRPITPPARPSKPILDNRSSVKSRPIIEAPRKKTGPDRNSPVQPRTQNNQNRQRIPNKPGKPPLRGNPPVELVGAPIRRSNKPNNNVKGPRDGGYRPGPPNRNDPSNQQGHVKRDIKAPIRQRPGMPPGMRKPVAPGELMQLQKPTGRSQPPAPRRVGAPAPPSQRADSTKDRQGKSPGAKQPVNRPTPATAPKKPSHRPPGSGPTKRRSDWDDAAKLEALRNKAPQKQRQKVHIIGENDDALTTETSGFAAEQEAMVLSASLARPAKPKSTKKSNSKATVVTRKRKKESTRQRQRRRAMELRAAREAKQVRPEMIIIPEGNLTVQELADKLSVESSEIIKSLFFKGITATVTQSLDLSTIETVAEEFGVPVLQDDIEEAATKTAEMLDEADKDHLIRRPPVVTVMGHVDHGKTSLLDAIRKARVASGEAGGITQHIGAYQVELEHEKKKRKLTFLDTPGHEAFTAMRARGTKVTDVAVLVVAADDGVRPQTLEAISHARAAKVPIVVAINKIDKEGASPDRVKQELSEQELVAEEWGGEVVMVPVSAIKGENIDKLLEMVLLVTEVEDLQANPDRLAKGTVIEAHLDKAKGPVATLLIQNGTLKSGDVLAAGPVLGKVRAMVDENGIRLKEAGPSCPVEALGFNEVPTAGDEFEVYPDEKSARAVVGDRASDARATRLAQQMASRRVSLSSMSGQANEGDLKELNIILKADVQGSIEAILGSLEQLPKDEVQVRVLLSAPGEVTETDVDLAAASGAVIVGFNTSMASGAKKAADANSVDVRDYEVIYKLLEDIQLAMEGLLEPDMVEESLGEAEVRAIFSIGKSAVAGCYITNGKLQRNCKVRVKRGSQIVFEGDLDSLRRNKDVVKDVGSGFECGVGCDRFANWKEGDIIQGYKLVTKRRTLGP.

Polar residues-rich tracts occupy residues 56-72 (QSNQ…SSKE), 129-139 (KANTSNQSKGV), 162-187 (LENN…TQLV), and 194-205 (TKNNEPPQQKTS). 2 disordered regions span residues 56-446 (QSNQ…IGEN) and 470-504 (LARP…RQRR). Over residues 248–265 (PVQPRTQNNQNRQRIPNK) the composition is skewed to low complexity. Positions 415–429 (RRSDWDDAAKLEALR) are enriched in basic and acidic residues. Composition is skewed to basic residues over residues 474–483 (AKPKSTKKSN) and 490–504 (TRKR…RQRR). The 173-residue stretch at 605-777 (RRPPVVTVMG…VLLVTEVEDL (173 aa)) folds into the tr-type G domain. Residues 614-621 (GHVDHGKT) are G1. A GTP-binding site is contributed by 614–621 (GHVDHGKT). Residues 639 to 643 (GITQH) form a G2 region. The G3 stretch occupies residues 664-667 (DTPG). GTP contacts are provided by residues 664 to 668 (DTPGH) and 718 to 721 (NKID). Positions 718–721 (NKID) are G4. The G5 stretch occupies residues 754-756 (SAI).

The protein belongs to the TRAFAC class translation factor GTPase superfamily. Classic translation factor GTPase family. IF-2 subfamily.

It localises to the cytoplasm. One of the essential components for the initiation of protein synthesis. Protects formylmethionyl-tRNA from spontaneous hydrolysis and promotes its binding to the 30S ribosomal subunits. Also involved in the hydrolysis of GTP during the formation of the 70S ribosomal complex. In Prochlorococcus marinus (strain MIT 9211), this protein is Translation initiation factor IF-2.